The following is a 433-amino-acid chain: Probable RNA 3'-terminal phosphate cyclase (433 aa).

Over residues 1–10 (MGKNKNYNKN) the composition is skewed to low complexity. The disordered stretch occupies residues 1-28 (MGKNKNYNKNQFKKSKTNNDTTVAQQQQ). The segment covering 18 to 28 (NNDTTVAQQQQ) has biased composition (polar residues). ATP-binding positions include glutamine 137 and 328–332 (YLQDQ). Histidine 354 acts as the Tele-AMP-histidine intermediate in catalysis. The segment at 400–433 (LNNNNNNSNSNTTTTTTTTTISTTTIDNQNSEEK) is disordered. Low complexity predominate over residues 401 to 425 (NNNNNNSNSNTTTTTTTTTISTTTI).

It belongs to the RNA 3'-terminal cyclase family. Type 1 subfamily.

The protein resides in the nucleus. It is found in the nucleoplasm. The catalysed reaction is a 3'-end 3'-phospho-ribonucleotide-RNA + ATP = a 3'-end 2',3'-cyclophospho-ribonucleotide-RNA + AMP + diphosphate. Functionally, catalyzes the conversion of 3'-phosphate to a 2',3'-cyclic phosphodiester at the end of RNA. The mechanism of action of the enzyme occurs in 3 steps: (A) adenylation of the enzyme by ATP; (B) transfer of adenylate to an RNA-N3'P to produce RNA-N3'PP5'A; (C) and attack of the adjacent 2'-hydroxyl on the 3'-phosphorus in the diester linkage to produce the cyclic end product. The biological role of this enzyme is unknown but it is likely to function in some aspects of cellular RNA processing. This Dictyostelium discoideum (Social amoeba) protein is Probable RNA 3'-terminal phosphate cyclase (rtca).